The chain runs to 127 residues: Small ribosomal subunit protein uS11 (127 aa).

It belongs to the universal ribosomal protein uS11 family. In terms of assembly, part of the 30S ribosomal subunit. Interacts with proteins S7 and S18. Binds to IF-3.

Its function is as follows. Located on the platform of the 30S subunit, it bridges several disparate RNA helices of the 16S rRNA. Forms part of the Shine-Dalgarno cleft in the 70S ribosome. The sequence is that of Small ribosomal subunit protein uS11 from Flavobacterium psychrophilum (strain ATCC 49511 / DSM 21280 / CIP 103535 / JIP02/86).